The following is a 366-amino-acid chain: Isocitrate dehydrogenase [NAD] subunit alpha, mitochondrial (366 aa).

The N-terminal 27 residues, 1 to 27 (MAGSAWVSKVSRLLGAFHNTKQVTRGF), are a transit peptide targeting the mitochondrion. Lysine 77 carries the N6-succinyllysine modification. Threonine 101 carries the post-translational modification Phosphothreonine. Substrate contacts are provided by arginine 115, arginine 125, and arginine 146. Residue lysine 223 is modified to N6-acetyllysine. The Mg(2+) site is built by aspartate 233, aspartate 257, and aspartate 261. Lysine 343 is subject to N6-acetyllysine; alternate. At lysine 343 the chain carries N6-succinyllysine; alternate. Lysine 350 is subject to N6-succinyllysine.

The protein belongs to the isocitrate and isopropylmalate dehydrogenases family. As to quaternary structure, heterooligomer of subunits alpha (IDH3A), beta (IDH3B), and gamma (IDH3G) in the apparent ratio of 2:1:1. The heterodimer containing one IDH3A and one IDH3B subunit and the heterodimer containing one IDH3A and one IDH3G subunit assemble into a heterotetramer (which contains two subunits of IDH3A, one of IDH3B and one of IDH3G) and further into the heterooctamer. Requires Mg(2+) as cofactor. Mn(2+) is required as a cofactor. Expressed in brown adipose tissue (BAT).

The protein resides in the mitochondrion. It carries out the reaction D-threo-isocitrate + NAD(+) = 2-oxoglutarate + CO2 + NADH. The heterotetramer and the heterodimer composed of IDH3A and IDH3G subunits can be allosterically activated by citrate (CIT) or/and ADP, and the two activators can act independently or synergistically. The heterodimer composed of IDH3A and IDH3B subunits cannot be allosterically regulated and the allosteric regulation of the heterotetramer is through the IDH3G subunit and not the IDH3B subunit. The IDH3G subunit contains the allosteric site which consists of a CIT-binding site and an ADP-binding site, and the binding of CIT and ADP causes conformational changes at the allosteric site which are transmitted to the active site in the catalytic subunit (IDH3A) through a cascade of conformational changes at the heterodimer interface, leading to stabilization of the isocitrate-binding at the active site and thus activation of the enzyme. ATP can activate the heterotetramer and the heterodimer composed of IDH3A and IDH3G subunits at low concentrations but inhibits their activities at high concentrations, whereas ATP exhibits only inhibitory effect on the heterodimer composed of IDH3A and IDH3B subunits. Catalytic subunit of the enzyme which catalyzes the decarboxylation of isocitrate (ICT) into alpha-ketoglutarate. The heterodimer composed of the alpha (IDH3A) and beta (IDH3B) subunits and the heterodimer composed of the alpha (IDH3A) and gamma (IDH3G) subunits, have considerable basal activity but the full activity of the heterotetramer (containing two subunits of IDH3A, one of IDH3B and one of IDH3G) requires the assembly and cooperative function of both heterodimers. The protein is Isocitrate dehydrogenase [NAD] subunit alpha, mitochondrial of Rattus norvegicus (Rat).